Consider the following 353-residue polypeptide: Photosystem II protein D1 (353 aa).

Thr-2 is subject to N-acetylthreonine. Residue Thr-2 is modified to Phosphothreonine. 3 consecutive transmembrane segments (helical) span residues 29-46, 118-133, and 142-156; these read YIGW…TATS, HFLL…EWEL, and WIAV…AAAA. His-118 is a chlorophyll a binding site. Tyr-126 contacts pheophytin a. Positions 170 and 189 each coordinate [CaMn4O5] cluster. A helical membrane pass occupies residues 197 to 218; the sequence is FHMLGVAGVFGGSLFSAMHGSL. A chlorophyll a-binding site is contributed by His-198. Residues His-215 and 264–265 each bind a quinone; that span reads SF. His-215 serves as a coordination point for Fe cation. His-272 contributes to the Fe cation binding site. A helical transmembrane segment spans residues 274-288; sequence FLAAWPVVGIWFTAL. The [CaMn4O5] cluster site is built by His-332, Glu-333, Asp-342, and Ala-344. Residues 345-353 constitute a propeptide that is removed on maturation; sequence SVDAPSING.

This sequence belongs to the reaction center PufL/M/PsbA/D family. As to quaternary structure, PSII is composed of 1 copy each of membrane proteins PsbA, PsbB, PsbC, PsbD, PsbE, PsbF, PsbH, PsbI, PsbJ, PsbK, PsbL, PsbM, PsbT, PsbX, PsbY, PsbZ, Psb30/Ycf12, at least 3 peripheral proteins of the oxygen-evolving complex and a large number of cofactors. It forms dimeric complexes. Requires The D1/D2 heterodimer binds P680, chlorophylls that are the primary electron donor of PSII, and subsequent electron acceptors. It shares a non-heme iron and each subunit binds pheophytin, quinone, additional chlorophylls, carotenoids and lipids. D1 provides most of the ligands for the Mn4-Ca-O5 cluster of the oxygen-evolving complex (OEC). There is also a Cl(-1) ion associated with D1 and D2, which is required for oxygen evolution. The PSII complex binds additional chlorophylls, carotenoids and specific lipids. as cofactor. In terms of processing, tyr-161 forms a radical intermediate that is referred to as redox-active TyrZ, YZ or Y-Z. Post-translationally, C-terminally processed by CTPA; processing is essential to allow assembly of the oxygen-evolving complex and thus photosynthetic growth.

It is found in the plastid. The protein resides in the chloroplast thylakoid membrane. The catalysed reaction is 2 a plastoquinone + 4 hnu + 2 H2O = 2 a plastoquinol + O2. Its function is as follows. Photosystem II (PSII) is a light-driven water:plastoquinone oxidoreductase that uses light energy to abstract electrons from H(2)O, generating O(2) and a proton gradient subsequently used for ATP formation. It consists of a core antenna complex that captures photons, and an electron transfer chain that converts photonic excitation into a charge separation. The D1/D2 (PsbA/PsbD) reaction center heterodimer binds P680, the primary electron donor of PSII as well as several subsequent electron acceptors. This chain is Photosystem II protein D1, found in Adiantum capillus-veneris (Maidenhair fern).